An 87-amino-acid polypeptide reads, in one-letter code: Citrate lyase acyl carrier protein (87 aa).

Position 14 is an O-(phosphoribosyl dephospho-coenzyme A)serine (serine 14).

The protein belongs to the CitD family. In terms of assembly, oligomer with a subunit composition of (alpha,beta,gamma)6.

Its subcellular location is the cytoplasm. Covalent carrier of the coenzyme of citrate lyase. In Treponema denticola (strain ATCC 35405 / DSM 14222 / CIP 103919 / JCM 8153 / KCTC 15104), this protein is Citrate lyase acyl carrier protein.